A 149-amino-acid polypeptide reads, in one-letter code: Large ribosomal subunit protein uL15 (149 aa).

Positions R21 to Q54 are disordered. 2 stretches are compositionally biased toward gly residues: residues S23 to N35 and S42 to G52.

This sequence belongs to the universal ribosomal protein uL15 family. As to quaternary structure, part of the 50S ribosomal subunit.

Functionally, binds to the 23S rRNA. This chain is Large ribosomal subunit protein uL15, found in Lawsonia intracellularis (strain PHE/MN1-00).